We begin with the raw amino-acid sequence, 205 residues long: MARIYATLIGYVFGNFLTAMIVGKLFLKINPTEYGSHNPGTANMGAVFGKKWGILTCLGDLLKSLIALFIVYFVFPGHINIAYAGLGLILGHCFPIWNHFKGGKGVAVSAQVAVFYDWRAGLATLLIALILTAIMQNLTIPPLVFMLLFSVYEFWQNQEAGIVFMVITLIMVYKFWQDIIDFFTGHGKRVDILYSIKKKLGIKSE.

Helical transmembrane passes span 7–27, 52–74, 78–100, 125–145, and 160–180; these read TLIGYVFGNFLTAMIVGKLFL, WGILTCLGDLLKSLIALFIVYFV, HINIAYAGLGLILGHCFPIWNHF, LLIALILTAIMQNLTIPPLVF, and AGIVFMVITLIMVYKFWQDII.

It belongs to the PlsY family. In terms of assembly, probably interacts with PlsX.

It is found in the cell membrane. It catalyses the reaction an acyl phosphate + sn-glycerol 3-phosphate = a 1-acyl-sn-glycero-3-phosphate + phosphate. The protein operates within lipid metabolism; phospholipid metabolism. Catalyzes the transfer of an acyl group from acyl-phosphate (acyl-PO(4)) to glycerol-3-phosphate (G3P) to form lysophosphatidic acid (LPA). This enzyme utilizes acyl-phosphate as fatty acyl donor, but not acyl-CoA or acyl-ACP. The sequence is that of Glycerol-3-phosphate acyltransferase 1 from Lactobacillus acidophilus (strain ATCC 700396 / NCK56 / N2 / NCFM).